Consider the following 125-residue polypeptide: Glycine cleavage system H protein 1 (125 aa).

Positions 22–103 (KAYIGITDYA…PYGSWLVAVR (82 aa)) constitute a Lipoyl-binding domain. The residue at position 63 (lysine 63) is an N6-lipoyllysine.

It belongs to the GcvH family. The glycine cleavage system is composed of four proteins: P, T, L and H. It depends on (R)-lipoate as a cofactor.

The glycine cleavage system catalyzes the degradation of glycine. The H protein shuttles the methylamine group of glycine from the P protein to the T protein. The protein is Glycine cleavage system H protein 1 of Caldanaerobacter subterraneus subsp. tengcongensis (strain DSM 15242 / JCM 11007 / NBRC 100824 / MB4) (Thermoanaerobacter tengcongensis).